Here is a 312-residue protein sequence, read N- to C-terminus: tRNA dimethylallyltransferase (312 aa).

19–26 (GPSGSGKS) contributes to the ATP binding site. 21-26 (SGSGKS) serves as a coordination point for substrate. The interaction with substrate tRNA stretch occupies residues 44–47 (DSLS).

The protein belongs to the IPP transferase family. Monomer. Requires Mg(2+) as cofactor.

It carries out the reaction adenosine(37) in tRNA + dimethylallyl diphosphate = N(6)-dimethylallyladenosine(37) in tRNA + diphosphate. Its function is as follows. Catalyzes the transfer of a dimethylallyl group onto the adenine at position 37 in tRNAs that read codons beginning with uridine, leading to the formation of N6-(dimethylallyl)adenosine (i(6)A). In Helicobacter pylori (strain J99 / ATCC 700824) (Campylobacter pylori J99), this protein is tRNA dimethylallyltransferase.